The following is a 251-amino-acid chain: D-aminoacyl-tRNA deacylase (251 aa).

Belongs to the DtdA deacylase family. In terms of assembly, monomer. It depends on Zn(2+) as a cofactor.

The enzyme catalyses a D-aminoacyl-tRNA + H2O = a tRNA + a D-alpha-amino acid + H(+). It carries out the reaction glycyl-tRNA(Ala) + H2O = tRNA(Ala) + glycine + H(+). D-aminoacyl-tRNA deacylase with broad substrate specificity. By recycling D-aminoacyl-tRNA to D-amino acids and free tRNA molecules, this enzyme counteracts the toxicity associated with the formation of D-aminoacyl-tRNA entities in vivo. The polypeptide is D-aminoacyl-tRNA deacylase (Pyrobaculum aerophilum (strain ATCC 51768 / DSM 7523 / JCM 9630 / CIP 104966 / NBRC 100827 / IM2)).